The chain runs to 239 residues: Cysteine-rich venom protein ophanin (239 aa).

The N-terminal stretch at 1–18 is a signal peptide; the sequence is MIAFTLLSLAAVLQQSFG. Residues 37–165 enclose the SCP domain; sequence VDLHNSLRRS…EYSYFYVCQY (129 aa). Intrachain disulfides connect cysteine 74-cysteine 152, cysteine 91-cysteine 166, cysteine 147-cysteine 163, cysteine 185-cysteine 192, cysteine 188-cysteine 197, cysteine 201-cysteine 234, cysteine 210-cysteine 228, and cysteine 219-cysteine 232. The ShKT domain occupies 201-234; sequence CTLYNEYTNCDSLVKQSSCQDEWIKSKCPASCFC.

Expressed by the venom gland.

It localises to the secreted. Its function is as follows. Weakly blocks contraction of smooth muscle elicited by high potassium-induced depolarization, but does not block caffeine-stimulated contraction. May target voltage-gated calcium channels on smooth muscle. The protein is Cysteine-rich venom protein ophanin of Ophiophagus hannah (King cobra).